Reading from the N-terminus, the 261-residue chain is Probable septum site-determining protein MinC (261 aa).

Residues 106-144 (RAPAAKPADEAEPAAVPAVETAAAPAAAAAPEQSSDPAP) are disordered. Residues 118 to 144 (PAAVPAVETAAAPAAAAAPEQSSDPAP) show a composition bias toward low complexity.

Belongs to the MinC family. As to quaternary structure, interacts with MinD and FtsZ.

Its function is as follows. Cell division inhibitor that blocks the formation of polar Z ring septums. Rapidly oscillates between the poles of the cell to destabilize FtsZ filaments that have formed before they mature into polar Z rings. Prevents FtsZ polymerization. This Burkholderia orbicola (strain MC0-3) protein is Probable septum site-determining protein MinC.